The primary structure comprises 170 residues: Cathelicidin antimicrobial peptide (170 aa).

The N-terminal stretch at 1–30 is a signal peptide; sequence MKTQRDGPSLGRWSLVLLLLGLVMPLAIVA. Positions 31-131 are cleaved as a propeptide — cathelin-like domain (CLD); it reads QVLSYQEAVL…DISCDKDNRR (101 aa). 2 disulfide bridges follow: cysteine 86/cysteine 97 and cysteine 108/cysteine 125. Residues 150 to 162 are active core; sequence LKKIGQKIKDFLG.

The protein belongs to the cathelicidin family. In terms of assembly, monomer, homodimer or homotrimer (in vitro). Oligomerizes as tetra- or hexamer in solution (in vitro). In terms of processing, proteolytically cleaved by proteinase PRTN3 into antibacterial peptide LL-37. Proteolytically cleaved by cathepsin CTSG and neutrophil elastase ELANE. Post-translationally, resistant to proteolytic degradation in solution, and when bound to both zwitterionic (mimicking mammalian membranes) and negatively charged membranes (mimicking bacterial membranes). After secretion onto the skin surface, the CAMP gene product is processed by a serine protease-dependent mechanism into multiple novel antimicrobial peptides distinct from and shorter than cathelicidin LL-37. These peptides show enhanced antimicrobial action, acquiring the ability to kill skin pathogens such as S.aureus, E.coli and C.albicans. These peptides have lost the ability to stimulate CXCL8/IL8 release from keratinocytes. The peptides act synergistically, killing bacteria at lower concentrations when present together, and maintain activity at increased salt condition.

The protein resides in the secreted. It is found in the vesicle. In terms of biological role, antimicrobial protein that is an integral component of the innate immune system. Binds to bacterial lipopolysaccharides (LPS). Acts via neutrophil N-formyl peptide receptors to enhance the release of CXCL2. Postsecretory processing generates multiple cathelicidin antimicrobial peptides with various lengths which act as a topical antimicrobial defense in sweat on skin. The unprocessed precursor form, cathelicidin antimicrobial peptide, inhibits the growth of Gram-negative E.coli and E.aerogenes with efficiencies comparable to that of the mature peptide LL-37 (in vitro). Its function is as follows. Antimicrobial peptide that is an integral component of the innate immune system. Binds to bacterial lipopolysaccharides (LPS). Causes membrane permeabilization by forming transmembrane pores (in vitro). Causes lysis of E.coli. Exhibits antimicrobial activity against Gram-negative bacteria such as P.aeruginosa, S.typhimurium, E.aerogenes, E.coli and P.syringae, Gram-positive bacteria such as L.monocytogenes, S.epidermidis, S.pyogenes and S.aureus, as well as vancomycin-resistant enterococci (in vitro). Exhibits antimicrobial activity against methicillin-resistant S.aureus, P.mirabilis, and C.albicans in low-salt media, but not in media containing 100 mM NaCl (in vitro). Forms chiral supramolecular assemblies with quinolone signal (PQS) molecules of P.aeruginosa, which may lead to interference of bacterial quorum signaling and perturbance of bacterial biofilm formation. May form supramolecular fiber-like assemblies on bacterial membranes. Induces cytokine and chemokine producation as well as TNF/TNFA and CSF2/GMCSF production in normal human keratinocytes. Exhibits hemolytic activity against red blood cells. Exhibits antimicrobial activity against E.coli and B.megaterium (in vitro). This Chlorocebus aethiops (Green monkey) protein is Cathelicidin antimicrobial peptide.